Consider the following 299-residue polypeptide: 33 kDa chaperonin (299 aa).

Cystine bridges form between Cys239/Cys241 and Cys272/Cys275.

The protein belongs to the HSP33 family. Post-translationally, under oxidizing conditions two disulfide bonds are formed involving the reactive cysteines. Under reducing conditions zinc is bound to the reactive cysteines and the protein is inactive.

Its subcellular location is the cytoplasm. In terms of biological role, redox regulated molecular chaperone. Protects both thermally unfolding and oxidatively damaged proteins from irreversible aggregation. Plays an important role in the bacterial defense system toward oxidative stress. This Acaryochloris marina (strain MBIC 11017) protein is 33 kDa chaperonin.